The primary structure comprises 625 residues: tRNA uridine 5-carboxymethylaminomethyl modification enzyme MnmG (625 aa).

14–19 (GAGHAG) is an FAD binding site. NAD(+) is bound at residue 273–287 (GPRYCPSIEDKIVRF).

This sequence belongs to the MnmG family. As to quaternary structure, homodimer. Heterotetramer of two MnmE and two MnmG subunits. FAD is required as a cofactor.

Its subcellular location is the cytoplasm. In terms of biological role, NAD-binding protein involved in the addition of a carboxymethylaminomethyl (cmnm) group at the wobble position (U34) of certain tRNAs, forming tRNA-cmnm(5)s(2)U34. In Clostridium botulinum (strain Hall / ATCC 3502 / NCTC 13319 / Type A), this protein is tRNA uridine 5-carboxymethylaminomethyl modification enzyme MnmG.